We begin with the raw amino-acid sequence, 443 residues long: D(2) dopamine receptor (443 aa).

At 1–37 (MDPLNLSWYDDDPESRNWSRPFNGSEGKVGKPHYNYY) the chain is on the extracellular side. Residues Asn-5, Asn-17, and Asn-23 are each glycosylated (N-linked (GlcNAc...) asparagine). A helical transmembrane segment spans residues 38–60 (AMLLTLLIFVIVFGNVLVCMAVS). The Cytoplasmic portion of the chain corresponds to 61 to 70 (REKALQTTTN). Residues 71-93 (YLIVSLAVADLLVATLVMPWVVY) traverse the membrane as a helical segment. Over 94 to 108 (LEVVGEWKFSRIHCD) the chain is Extracellular. An intrachain disulfide couples Cys-107 to Cys-182. Residues 109 to 130 (IFVTLDVMMCTASILNLCAISI) form a helical membrane-spanning segment. Residues 131–151 (DRYTAVAMPMLYNTRYSSKRR) are Cytoplasmic-facing. The helical transmembrane segment at 152–172 (VTVMIAIVWVLSFTISCPLLF) threads the bilayer. At 173–188 (GLNNTDQNECIIANPA) the chain is on the extracellular side. The helical transmembrane segment at 189–213 (FVVYSSVVSFYVPFIVTLLVYIKIY) threads the bilayer. Positions 211-373 (KIYIVLRRRR…SQQKEKKATQ (163 aa)) are interaction with PPP1R9B. Residues 214–373 (IVLRRRRKRV…SQQKEKKATQ (160 aa)) are Cytoplasmic-facing. The interval 282–331 (EMLSSTSPPERTRYSPIPPSHHQLTLPDPSHHGLHSTANSPVKPEKNGHA) is disordered. Residues 374–395 (MLAIVLGVFIICWLPFFITHIL) form a helical membrane-spanning segment. Residues 396 to 409 (NIHCDCNIPPVLYS) lie on the Extracellular side of the membrane. A disulfide bridge links Cys-399 with Cys-401. A helical transmembrane segment spans residues 410–431 (AFTWLGYVNSAVNPIIYTTFNV). Topologically, residues 432–443 (EFRKAFMKILHC) are cytoplasmic. Cys-443 carries S-palmitoyl cysteine lipidation.

This sequence belongs to the G-protein coupled receptor 1 family. In terms of assembly, forms homo- and heterooligomers with DRD4. The interaction with DRD4 may modulate agonist-induced downstream signaling. Interacts with CADPS and CADPS2. Interacts with GPRASP1, PPP1R9B and CLIC6. Interacts with ARRB2. Interacts with HTR2A. Interacts with DRD1. Interacts with KCNA2. Post-translationally, palmitoylated. Palmitoylation which is required for proper localization to the plasma membrane and stability of the receptor could be carried on by ZDHHC4, ZDHHC3 and ZDHHC8.

Its subcellular location is the cell membrane. The protein resides in the golgi apparatus membrane. Dopamine receptor whose activity is mediated by G proteins which inhibit adenylyl cyclase. Positively regulates postnatal regression of retinal hyaloid vessels via suppression of VEGFR2/KDR activity, downstream of OPN5. The sequence is that of D(2) dopamine receptor (DRD2) from Mustela putorius furo (European domestic ferret).